Reading from the N-terminus, the 125-residue chain is Small ribosomal subunit protein eS6 (125 aa).

Belongs to the eukaryotic ribosomal protein eS6 family. Part of the 30S ribosomal subunit.

In Thermococcus kodakarensis (strain ATCC BAA-918 / JCM 12380 / KOD1) (Pyrococcus kodakaraensis (strain KOD1)), this protein is Small ribosomal subunit protein eS6.